A 993-amino-acid polypeptide reads, in one-letter code: Muscular LMNA-interacting protein (993 aa).

The interaction with LMNA stretch occupies residues M1 to V51. The interval P71–Y90 is disordered. The span at E80–Y90 shows a compositional bias: polar residues. S146 bears the Phosphoserine mark. Disordered regions lie at residues A152–R171, V186–Q225, P231–L250, P300–L322, S334–S358, S443–L481, T500–Y582, S677–L711, and L811–T864. The tract at residues P161–T837 is required for interaction with ISL1. Polar residues predominate over residues K212–Q225. Over residues P300 to A315 the composition is skewed to polar residues. Low complexity predominate over residues P343 to S358. Residues T500–K532 show a composition bias toward polar residues. Over residues S533–K563 the composition is skewed to low complexity. Residues S564–E574 show a composition bias toward basic and acidic residues. Residues S695–L711 are compositionally biased toward polar residues. The span at L811 to S822 shows a compositional bias: low complexity. S818 carries the phosphoserine modification. Residues A849 to T864 show a composition bias toward polar residues.

Directly interacts with LMNA. Interacts with ISL1 (via N-terminal domain); the interaction represses ISL1 transactivator activity. Interactions of ISL1 with MLIP1 and GCN5/KAT2A may be mutually exclusive. As to expression, predominantly expressed in the heart and skeletal muscle. Also detected in liver. Expressed in skeletal muscle.

It localises to the nucleus. Its subcellular location is the nucleus envelope. The protein resides in the PML body. It is found in the cytoplasm. The protein localises to the cytosol. It localises to the cell membrane. Its subcellular location is the sarcolemma. In terms of biological role, required for myoblast differentiation into myotubes, possibly acting as a transcriptional regulator of the myogenic program. Required for cardiac adaptation to stress through integrated regulation of the AKT/mTOR pathways and FOXO1. Regulates cardiac homeostasis and plays a role in the protection against cardiac hypertrophy. Binds chromatin. May act as a transcriptional cofactor for ISL1, repressing its transcriptional activity. May also repress MYOCD transcriptional activity. The polypeptide is Muscular LMNA-interacting protein (Homo sapiens (Human)).